Consider the following 842-residue polypeptide: Leucine--tRNA ligase (842 aa).

The short motif at 44–55 (PYPSANGLHVGH) is the 'HIGH' region element. Positions 619–623 (KMSKS) match the 'KMSKS' region motif. Lysine 622 lines the ATP pocket.

It belongs to the class-I aminoacyl-tRNA synthetase family.

It localises to the cytoplasm. The enzyme catalyses tRNA(Leu) + L-leucine + ATP = L-leucyl-tRNA(Leu) + AMP + diphosphate. In Borrelia duttonii (strain Ly), this protein is Leucine--tRNA ligase.